A 614-amino-acid polypeptide reads, in one-letter code: UvrABC system protein C (614 aa).

In terms of domain architecture, GIY-YIG spans 20–98; the sequence is TAPGVYRMYA…IKSLSPRYNV (79 aa). The UVR domain maps to 207–242; it reads DELTRELGEQMQAASEALEFEQAARLRDLISSLRSM.

It belongs to the UvrC family. As to quaternary structure, interacts with UvrB in an incision complex.

The protein resides in the cytoplasm. In terms of biological role, the UvrABC repair system catalyzes the recognition and processing of DNA lesions. UvrC both incises the 5' and 3' sides of the lesion. The N-terminal half is responsible for the 3' incision and the C-terminal half is responsible for the 5' incision. The sequence is that of UvrABC system protein C from Stenotrophomonas maltophilia (strain K279a).